Consider the following 909-residue polypeptide: Translation initiation factor IF-2 (909 aa).

A disordered region spans residues 49–314 (LNREQGGSAG…GKQRKTSTLQ (266 aa)). Composition is skewed to basic and acidic residues over residues 99 to 177 (DAVE…EHKQ), 186 to 236 (IQSE…KWSS), and 255 to 270 (RAAE…GDRR). Positions 271 to 285 (ARGRSGKATRQKKNN) are enriched in basic residues. Residues 286–299 (KHSESKADREEARA) show a composition bias toward basic and acidic residues. One can recognise a tr-type G domain in the interval 408-577 (PRAPVVTIMG…LLQAEVLELK (170 aa)). Residues 417-424 (GHVDHGKT) are G1. GTP is bound at residue 417–424 (GHVDHGKT). The interval 442-446 (GITQH) is G2. A G3 region spans residues 463 to 466 (DTPG). GTP is bound by residues 463–467 (DTPGH) and 517–520 (NKID). The segment at 517–520 (NKID) is G4. The segment at 553–555 (SAK) is G5.

It belongs to the TRAFAC class translation factor GTPase superfamily. Classic translation factor GTPase family. IF-2 subfamily.

It is found in the cytoplasm. Functionally, one of the essential components for the initiation of protein synthesis. Protects formylmethionyl-tRNA from spontaneous hydrolysis and promotes its binding to the 30S ribosomal subunits. Also involved in the hydrolysis of GTP during the formation of the 70S ribosomal complex. This chain is Translation initiation factor IF-2, found in Photorhabdus laumondii subsp. laumondii (strain DSM 15139 / CIP 105565 / TT01) (Photorhabdus luminescens subsp. laumondii).